A 56-amino-acid polypeptide reads, in one-letter code: Alpha-conotoxin EpI (56 aa).

Positions 1–16 (MFTVFLLVVLATTVVS) are cleaved as a signal peptide. Residues 17 to 39 (FTSDRASDSRKDAASGLIALTIK) constitute a propeptide that is removed on maturation. 2 disulfide bridges follow: cysteine 41–cysteine 47 and cysteine 42–cysteine 55. The segment at 43–45 (SDP) is ser-Xaa-Pro motif, crucial for potent interaction with nAChR. Tyrosine 54 is subject to Sulfotyrosine. A Cysteine amide modification is found at cysteine 55.

Belongs to the conotoxin A superfamily. Post-translationally, both tyrosine sulfation and C-terminal amidation are important for activity and structure stability. Expressed by the venom duct.

The protein resides in the secreted. Alpha-conotoxins act on postsynaptic membranes, they bind to the nicotinic acetylcholine receptors (nAChR) and thus inhibit them. This native peptide blocks mammalian nicotinic acetylcholine receptors composed of alpha-3-beta-2/CHRNA3-CHRNB2 and alpha-3-beta-4/CHRNA3-CHRNB4 subunits. This is Alpha-conotoxin EpI from Conus episcopatus (Bishop's cone).